Consider the following 276-residue polypeptide: Inositol-1-monophosphatase ImpA (276 aa).

Glutamate 74, aspartate 90, isoleucine 92, and aspartate 93 together coordinate Mg(2+). Glutamate 74 lines the substrate pocket. Residues 92–95 (IDGT), arginine 192, and aspartate 221 each bind substrate. A Mg(2+)-binding site is contributed by aspartate 221.

This sequence belongs to the inositol monophosphatase superfamily. Mg(2+) is required as a cofactor.

It carries out the reaction a myo-inositol phosphate + H2O = myo-inositol + phosphate. Its pathway is polyol metabolism; myo-inositol biosynthesis; myo-inositol from D-glucose 6-phosphate: step 2/2. Catalyzes the dephosphorylation of inositol 1-phosphate (I-1-P) to yield free myo-inositol, a key metabolite in mycobacteria. This is Inositol-1-monophosphatase ImpA (impA) from Mycolicibacterium smegmatis (strain ATCC 700084 / mc(2)155) (Mycobacterium smegmatis).